Consider the following 652-residue polypeptide: tRNA 5-methylaminomethyl-2-thiouridine biosynthesis bifunctional protein MnmC (652 aa).

The tRNA (mnm(5)s(2)U34)-methyltransferase stretch occupies residues 1–235 (MPDRLVPATL…EPALRVGEYA (235 aa)). The segment at 259–652 (IGAGLAGCAV…IRALRGRQIG (394 aa)) is FAD-dependent cmnm(5)s(2)U34 oxidoreductase.

This sequence in the N-terminal section; belongs to the methyltransferase superfamily. tRNA (mnm(5)s(2)U34)-methyltransferase family. The protein in the C-terminal section; belongs to the DAO family. FAD serves as cofactor.

The protein localises to the cytoplasm. It carries out the reaction 5-aminomethyl-2-thiouridine(34) in tRNA + S-adenosyl-L-methionine = 5-methylaminomethyl-2-thiouridine(34) in tRNA + S-adenosyl-L-homocysteine + H(+). Its function is as follows. Catalyzes the last two steps in the biosynthesis of 5-methylaminomethyl-2-thiouridine (mnm(5)s(2)U) at the wobble position (U34) in tRNA. Catalyzes the FAD-dependent demodification of cmnm(5)s(2)U34 to nm(5)s(2)U34, followed by the transfer of a methyl group from S-adenosyl-L-methionine to nm(5)s(2)U34, to form mnm(5)s(2)U34. The sequence is that of tRNA 5-methylaminomethyl-2-thiouridine biosynthesis bifunctional protein MnmC from Burkholderia ambifaria (strain MC40-6).